Reading from the N-terminus, the 374-residue chain is Calcium/calmodulin-dependent protein kinase type 1 (374 aa).

The Protein kinase domain occupies 20–276 (YDFRDVLGTG…CEQALQHPWI (257 aa)). ATP-binding positions include 26-34 (LGTGAFSEV) and K49. K59 participates in a covalent cross-link: Glycyl lysine isopeptide (Lys-Gly) (interchain with G-Cter in ubiquitin). Residue D141 is the Proton acceptor of the active site. A Phosphothreonine; by CaMKK1 and CaMKK2 modification is found at T177. An autoinhibitory domain region spans residues 276–316 (IAGDTALDKNIHQSVSEQIKKNFAKSKWKQAFNATAVVRHM). Residues 296-317 (KNFAKSKWKQAFNATAVVRHMR) form a calmodulin-binding region. The Nuclear export signal motif lies at 315-321 (HMRKLQL).

This sequence belongs to the protein kinase superfamily. CAMK Ser/Thr protein kinase family. CaMK subfamily. As to quaternary structure, monomer. Interacts with XPO1. In terms of processing, phosphorylated by CaMKK1 and CaMKK2 on Thr-177. Post-translationally, polybiquitinated by the E3 ubiquitin-protein ligase complex SCF(FBXL12), leading to proteasomal degradation. In terms of tissue distribution, ubiquitous.

It is found in the cytoplasm. Its subcellular location is the nucleus. The enzyme catalyses L-seryl-[protein] + ATP = O-phospho-L-seryl-[protein] + ADP + H(+). It carries out the reaction L-threonyl-[protein] + ATP = O-phospho-L-threonyl-[protein] + ADP + H(+). Activated by Ca(2+)/calmodulin. Binding of calmodulin results in conformational change that relieves intrasteric autoinhibition and allows phosphorylation of Thr-177 within the activation loop by CaMKK1 or CaMKK2. Phosphorylation of Thr-177 results in several fold increase in total activity. Unlike CaMK4, is unable to exhibit autonomous activity after Ca(2+)/calmodulin activation. Calcium/calmodulin-dependent protein kinase that operates in the calcium-triggered CaMKK-CaMK1 signaling cascade and, upon calcium influx, regulates transcription activators activity, cell cycle, hormone production, cell differentiation, actin filament organization and neurite outgrowth. Recognizes the substrate consensus sequence [MVLIF]-x-R-x(2)-[ST]-x(3)-[MVLIF]. Regulates axonal extension and growth cone motility in hippocampal and cerebellar nerve cells. Upon NMDA receptor-mediated Ca(2+) elevation, promotes dendritic growth in hippocampal neurons and is essential in synapses for full long-term potentiation (LTP) and ERK2-dependent translational activation. Downstream of NMDA receptors, promotes the formation of spines and synapses in hippocampal neurons by phosphorylating ARHGEF7/BETAPIX on 'Ser-673', which results in the enhancement of ARHGEF7 activity and activation of RAC1. Promotes neuronal differentiation and neurite outgrowth by activation and phosphorylation of MARK2 on 'Ser-91', 'Ser-92', 'Ser-93' and 'Ser-294'. Promotes nuclear export of HDAC5 and binding to 14-3-3 by phosphorylation of 'Ser-259' and 'Ser-498' in the regulation of muscle cell differentiation. Regulates NUMB-mediated endocytosis by phosphorylation of NUMB on 'Ser-276' and 'Ser-295'. Involved in the regulation of basal and estrogen-stimulated migration of medulloblastoma cells through ARHGEF7/BETAPIX phosphorylation. Is required for proper activation of cyclin-D1/CDK4 complex during G1 progression in diploid fibroblasts. Plays a role in K(+) and ANG2-mediated regulation of the aldosterone synthase (CYP11B2) to produce aldosterone in the adrenal cortex. Phosphorylates EIF4G3/eIF4GII. In vitro phosphorylates CREB1, ATF1, CFTR, MYL9 and SYN1/synapsin I. This is Calcium/calmodulin-dependent protein kinase type 1 (Camk1) from Mus musculus (Mouse).